A 114-amino-acid polypeptide reads, in one-letter code: Iron-sulfur cluster insertion protein ErpA (114 aa).

The iron-sulfur cluster site is built by cysteine 42, cysteine 106, and cysteine 108.

This sequence belongs to the HesB/IscA family. As to quaternary structure, homodimer. Iron-sulfur cluster serves as cofactor.

In terms of biological role, required for insertion of 4Fe-4S clusters for at least IspG. The polypeptide is Iron-sulfur cluster insertion protein ErpA (Klebsiella pneumoniae subsp. pneumoniae (strain ATCC 700721 / MGH 78578)).